The primary structure comprises 379 residues: UDP-4-amino-4-deoxy-L-arabinose--oxoglutarate aminotransferase (379 aa).

K182 bears the N6-(pyridoxal phosphate)lysine mark.

This sequence belongs to the DegT/DnrJ/EryC1 family. ArnB subfamily. As to quaternary structure, homodimer. Pyridoxal 5'-phosphate is required as a cofactor.

The catalysed reaction is UDP-4-amino-4-deoxy-beta-L-arabinose + 2-oxoglutarate = UDP-beta-L-threo-pentopyranos-4-ulose + L-glutamate. It participates in nucleotide-sugar biosynthesis; UDP-4-deoxy-4-formamido-beta-L-arabinose biosynthesis; UDP-4-deoxy-4-formamido-beta-L-arabinose from UDP-alpha-D-glucuronate: step 2/3. Its pathway is bacterial outer membrane biogenesis; lipopolysaccharide biosynthesis. In terms of biological role, catalyzes the conversion of UDP-4-keto-arabinose (UDP-Ara4O) to UDP-4-amino-4-deoxy-L-arabinose (UDP-L-Ara4N). The modified arabinose is attached to lipid A and is required for resistance to polymyxin and cationic antimicrobial peptides. The sequence is that of UDP-4-amino-4-deoxy-L-arabinose--oxoglutarate aminotransferase from Shigella boydii serotype 4 (strain Sb227).